The primary structure comprises 54 residues: VATVDCSDYPKPACTVEYMPLCGSDNKTYGNKCNFCNAVVDSNGTLTLSHFGKC.

Residues 4 to 54 (VDCSDYPKPACTVEYMPLCGSDNKTYGNKCNFCNAVVDSNGTLTLSHFGKC) enclose the Kazal-like domain. 3 disulfide bridges follow: Cys-6-Cys-36, Cys-14-Cys-33, and Cys-22-Cys-54. An N-linked (GlcNAc...) asparagine glycan is attached at Asn-43.

The protein resides in the secreted. This Anser canagicus (Emperor goose) protein is Ovomucoid.